A 226-amino-acid polypeptide reads, in one-letter code: Phosphoribosylformylglycinamidine synthase subunit PurQ (226 aa).

Residues 2-225 (RFGIVVFPGS…MHYLEGGKNN (224 aa)) enclose the Glutamine amidotransferase type-1 domain. Cys-86 (nucleophile) is an active-site residue. Catalysis depends on residues His-194 and Glu-196.

As to quaternary structure, part of the FGAM synthase complex composed of 1 PurL, 1 PurQ and 2 PurS subunits.

Its subcellular location is the cytoplasm. The catalysed reaction is N(2)-formyl-N(1)-(5-phospho-beta-D-ribosyl)glycinamide + L-glutamine + ATP + H2O = 2-formamido-N(1)-(5-O-phospho-beta-D-ribosyl)acetamidine + L-glutamate + ADP + phosphate + H(+). It carries out the reaction L-glutamine + H2O = L-glutamate + NH4(+). It participates in purine metabolism; IMP biosynthesis via de novo pathway; 5-amino-1-(5-phospho-D-ribosyl)imidazole from N(2)-formyl-N(1)-(5-phospho-D-ribosyl)glycinamide: step 1/2. Part of the phosphoribosylformylglycinamidine synthase complex involved in the purines biosynthetic pathway. Catalyzes the ATP-dependent conversion of formylglycinamide ribonucleotide (FGAR) and glutamine to yield formylglycinamidine ribonucleotide (FGAM) and glutamate. The FGAM synthase complex is composed of three subunits. PurQ produces an ammonia molecule by converting glutamine to glutamate. PurL transfers the ammonia molecule to FGAR to form FGAM in an ATP-dependent manner. PurS interacts with PurQ and PurL and is thought to assist in the transfer of the ammonia molecule from PurQ to PurL. The chain is Phosphoribosylformylglycinamidine synthase subunit PurQ from Alkaliphilus metalliredigens (strain QYMF).